The following is a 744-amino-acid chain: Collagen alpha-1(VIII) chain (744 aa).

An N-terminal signal peptide occupies residues 1–27; the sequence is MAVQPGPPQLLQVLLTISLGSIRLIQA. Residues 29–117 form a nonhelical region (NC2) region; it reads AYYGIKPLPP…GKEIPLASLR (89 aa). Over residues 101–110 the composition is skewed to basic and acidic residues; the sequence is KEAVPKKGKE. Disordered regions lie at residues 101 to 434 and 463 to 584; these read KEAV…PGLQ and EAGH…QGEY. Residues 118–571 form a triple-helical region region; that stretch reads GEQGPRGEPG…PGPPGPPGPP (454 aa). The segment covering 128–137 has biased composition (pro residues); sequence PRGPPGPPGL. A compositionally biased stretch (low complexity) spans 168 to 190; it reads KPGAMGMPGAKGEIGPKGEIGPM. Residues 203–217 show a composition bias toward gly residues; sequence GLPGIGKPGGPGLPG. Positions 288-298 are enriched in pro residues; that stretch reads KPGPPGEPGPQ. The segment covering 328 to 337 has biased composition (gly residues); it reads GFPGGKGEQG. Pro residues predominate over residues 389–403; that stretch reads PGEPGLPGIPGPMGP. A compositionally biased stretch (gly residues) spans 411–420; it reads GPKGEGGIVG. 2 stretches are compositionally biased toward low complexity: residues 469 to 506 and 540 to 556; these read LPGL…TGPS and LHGP…QGQP. Residues 558–579 are compositionally biased toward pro residues; sequence LPGPPGPPGPPGPPAVMPPTPA. Residues 572 to 744 are nonhelical region (NC1); the sequence is AVMPPTPAPQ…SFSGYLLYPM (173 aa). In terms of domain architecture, C1q spans 611–744; the sequence is PAYEMPAFTA…SFSGYLLYPM (134 aa).

Homotrimers, or heterotrimers in association with alpha 2(VIII) type collagens. Four homotrimers can form a tetrahedron stabilized by central interacting C-terminal NC1 trimers. In terms of processing, prolines at the third position of the tripeptide repeating unit (G-X-Y) are hydroxylated in some or all of the chains.

Its subcellular location is the secreted. The protein resides in the extracellular space. The protein localises to the extracellular matrix. It is found in the basement membrane. Macromolecular component of the subendothelium. Major component of the Descemet's membrane (basement membrane) of corneal endothelial cells. Also a component of the endothelia of blood vessels. Necessary for migration and proliferation of vascular smooth muscle cells and thus, has a potential role in the maintenance of vessel wall integrity and structure, in particular in atherogenesis. In Gallus gallus (Chicken), this protein is Collagen alpha-1(VIII) chain (COL8A1).